The following is a 145-amino-acid chain: MAFRTPLFSLVTLSALLSMAPARAAAPALTPPTQGAEQALSVSTLRLSFDLSAAREEGQELGGAALWQGGDLLVAQPVPAGAKVVPGSSRLGDRPLPDPTRSARGVLYWTVPLRDLPAGASELSYQVTHTQAARRAARRGAEPAW.

This is an uncharacterized protein from Deinococcus radiodurans (strain ATCC 13939 / DSM 20539 / JCM 16871 / CCUG 27074 / LMG 4051 / NBRC 15346 / NCIMB 9279 / VKM B-1422 / R1).